A 397-amino-acid chain; its full sequence is Succinate--CoA ligase [ADP-forming] subunit beta (397 aa).

The 246-residue stretch at 9-254 (KALLKGYGAP…ETEEDAKEIE (246 aa)) folds into the ATP-grasp domain. Residues Lys46, 53-55 (GRG), Glu109, Ala112, and Glu117 contribute to the ATP site. 2 residues coordinate Mg(2+): Asn209 and Asp223. Residues Asn274 and 331-333 (GIM) contribute to the substrate site.

The protein belongs to the succinate/malate CoA ligase beta subunit family. In terms of assembly, heterotetramer of two alpha and two beta subunits. Mg(2+) is required as a cofactor.

The catalysed reaction is succinate + ATP + CoA = succinyl-CoA + ADP + phosphate. It carries out the reaction GTP + succinate + CoA = succinyl-CoA + GDP + phosphate. Its pathway is carbohydrate metabolism; tricarboxylic acid cycle; succinate from succinyl-CoA (ligase route): step 1/1. Functionally, succinyl-CoA synthetase functions in the citric acid cycle (TCA), coupling the hydrolysis of succinyl-CoA to the synthesis of either ATP or GTP and thus represents the only step of substrate-level phosphorylation in the TCA. The beta subunit provides nucleotide specificity of the enzyme and binds the substrate succinate, while the binding sites for coenzyme A and phosphate are found in the alpha subunit. The chain is Succinate--CoA ligase [ADP-forming] subunit beta from Rhizobium leguminosarum bv. trifolii (strain WSM2304).